The sequence spans 127 residues: Glycine cleavage system H protein (127 aa).

In terms of domain architecture, Lipoyl-binding spans 22 to 104; it reads KVRIGITDFA…YEKAWMIVIE (83 aa). An N6-lipoyllysine modification is found at Lys-63.

This sequence belongs to the GcvH family. The glycine cleavage system is composed of four proteins: P, T, L and H. The cofactor is (R)-lipoate.

In terms of biological role, the glycine cleavage system catalyzes the degradation of glycine. The H protein shuttles the methylamine group of glycine from the P protein to the T protein. Is also involved in protein lipoylation via its role as an octanoyl/lipoyl carrier protein intermediate. The sequence is that of Glycine cleavage system H protein from Geobacillus thermodenitrificans (strain NG80-2).